A 571-amino-acid polypeptide reads, in one-letter code: Urease subunit alpha (571 aa).

Residues 129 to 571 form the Urease domain; sequence GGIDSHIHFI…LPMAQRYFLF (443 aa). His134, His136, and Lys217 together coordinate Ni(2+). N6-carboxylysine is present on Lys217. His219 lines the substrate pocket. The Ni(2+) site is built by His246 and His272. The active-site Proton donor is the His320. Asp360 is a binding site for Ni(2+).

This sequence belongs to the metallo-dependent hydrolases superfamily. Urease alpha subunit family. Heterotrimer of UreA (gamma), UreB (beta) and UreC (alpha) subunits. Three heterotrimers associate to form the active enzyme. Ni cation is required as a cofactor. In terms of processing, carboxylation allows a single lysine to coordinate two nickel ions.

It localises to the cytoplasm. It catalyses the reaction urea + 2 H2O + H(+) = hydrogencarbonate + 2 NH4(+). It functions in the pathway nitrogen metabolism; urea degradation; CO(2) and NH(3) from urea (urease route): step 1/1. This chain is Urease subunit alpha, found in Cupriavidus necator (strain ATCC 17699 / DSM 428 / KCTC 22496 / NCIMB 10442 / H16 / Stanier 337) (Ralstonia eutropha).